Reading from the N-terminus, the 354-residue chain is Uroporphyrinogen decarboxylase (354 aa).

Substrate contacts are provided by residues Arg-27 to Arg-31, Asp-77, Tyr-154, Thr-209, and His-327.

Belongs to the uroporphyrinogen decarboxylase family. Homodimer.

The protein localises to the cytoplasm. It catalyses the reaction uroporphyrinogen III + 4 H(+) = coproporphyrinogen III + 4 CO2. The protein operates within porphyrin-containing compound metabolism; protoporphyrin-IX biosynthesis; coproporphyrinogen-III from 5-aminolevulinate: step 4/4. Functionally, catalyzes the decarboxylation of four acetate groups of uroporphyrinogen-III to yield coproporphyrinogen-III. The polypeptide is Uroporphyrinogen decarboxylase (Escherichia coli O81 (strain ED1a)).